We begin with the raw amino-acid sequence, 34 residues long: Photosystem I reaction center subunit XII (34 aa).

Residues 10-32 (IFIALVVAAHAGVLAVRLCVSLY) form a helical membrane-spanning segment.

It belongs to the PsaM family.

The protein localises to the cellular thylakoid membrane. This is Photosystem I reaction center subunit XII from Synechococcus sp. (strain WH7803).